We begin with the raw amino-acid sequence, 178 residues long: Acireductone dioxygenase (178 aa).

Fe(2+)-binding residues include H100, H102, E106, and H145. Positions 100, 102, 106, and 145 each coordinate Ni(2+).

The protein belongs to the acireductone dioxygenase (ARD) family. In terms of assembly, monomer. Fe(2+) is required as a cofactor. It depends on Ni(2+) as a cofactor.

The enzyme catalyses 1,2-dihydroxy-5-(methylsulfanyl)pent-1-en-3-one + O2 = 3-(methylsulfanyl)propanoate + CO + formate + 2 H(+). It carries out the reaction 1,2-dihydroxy-5-(methylsulfanyl)pent-1-en-3-one + O2 = 4-methylsulfanyl-2-oxobutanoate + formate + 2 H(+). The protein operates within amino-acid biosynthesis; L-methionine biosynthesis via salvage pathway; L-methionine from S-methyl-5-thio-alpha-D-ribose 1-phosphate: step 5/6. Its function is as follows. Catalyzes 2 different reactions between oxygen and the acireductone 1,2-dihydroxy-3-keto-5-methylthiopentene (DHK-MTPene) depending upon the metal bound in the active site. Fe-containing acireductone dioxygenase (Fe-ARD) produces formate and 2-keto-4-methylthiobutyrate (KMTB), the alpha-ketoacid precursor of methionine in the methionine recycle pathway. Ni-containing acireductone dioxygenase (Ni-ARD) produces methylthiopropionate, carbon monoxide and formate, and does not lie on the methionine recycle pathway. The chain is Acireductone dioxygenase (mtnD) from Bacillus subtilis (strain 168).